The following is a 156-amino-acid chain: Small ribosomal subunit protein uS7 (156 aa).

This sequence belongs to the universal ribosomal protein uS7 family. Part of the 30S ribosomal subunit. Contacts proteins S9 and S11.

Functionally, one of the primary rRNA binding proteins, it binds directly to 16S rRNA where it nucleates assembly of the head domain of the 30S subunit. Is located at the subunit interface close to the decoding center, probably blocks exit of the E-site tRNA. In Mycolicibacterium vanbaalenii (strain DSM 7251 / JCM 13017 / BCRC 16820 / KCTC 9966 / NRRL B-24157 / PYR-1) (Mycobacterium vanbaalenii), this protein is Small ribosomal subunit protein uS7.